The chain runs to 465 residues: MNVTSLFSFTSPAVKRLLGWKQGDEEEKWAEKAVDALVKKLKKKKGAMEELEKALSCPGQPSNCVTIPRSLDGRLQVSHRKGLPHVIYCRVWRWPDLQSHHELKPLECCEFPFGSKQKEVCINPYHYKRVESPVLPPVLVPRHSEYNPQHSLLAQFRNLGQNEPHMPLNATFPDSFQQPNSHPFPHSPNSSYPNSPGSSSSTYPHSPTSSDPGSPFQMPADTPPPAYLPPEDPMTQDGSQPMDTNMMAPPLPSEINRGDVQAVAYEEPKHWCSIVYYELNNRVGEAFHASSTSVLVDGFTDPSNNKNRFCLGLLSNVNRNSTIENTRRHIGKGVHLYYVGGEVYAECLSDSSIFVQSRNCNYHHGFHPTTVCKIPSGCSLKIFNNQEFAQLLAQSVNHGFETVYELTKMCTIRMSFVKGWGAEYHRQDVTSTPCWIEIHLHGPLQWLDKVLTQMGSPHNPISSVS.

Met-1 carries the N-acetylmethionine modification. The 125-residue stretch at 12–136 folds into the MH1 domain; the sequence is PAVKRLLGWK…YKRVESPVLP (125 aa). Residues Cys-64, Cys-109, Cys-121, and His-126 each contribute to the Zn(2+) site. Residues 162 to 248 are disordered; sequence NEPHMPLNAT…SQPMDTNMMA (87 aa). Residues 179-210 are compositionally biased toward low complexity; that stretch reads PNSHPFPHSPNSSYPNSPGSSSSTYPHSPTSS. The span at 221–232 shows a compositional bias: pro residues; sequence DTPPPAYLPPED. An MH2 domain is found at 271–465; it reads WCSIVYYELN…SPHNPISSVS (195 aa). Thr-322 is subject to Phosphothreonine; by MINK1, TNIK and MAP4K4. The L3 loop stretch occupies residues 418–428; it reads KGWGAEYHRQD. Ser-463 and Ser-465 each carry phosphoserine.

It belongs to the dwarfin/SMAD family. In terms of assembly, found in a complex with SMAD4 and YY1. Interacts with HGS, NANOG and ZCCHC12. Upon C-terminus phosphorylation: forms trimers with another SMAD1 and the co-SMAD SMAD4. Interacts with PEBP2-alpha subunit, CREB-binding protein (CBP), p300, SMURF1, SMURF2, USP15 and HOXC8. Associates with ZNF423 or ZNF521 in response to BMP2 leading to activate transcription of BMP target genes. Interacts with SKOR1. Interacts (via MH2 domain) with LEMD3. Binding to LEMD3 results in at least a partial reduction of receptor-mediated phosphorylation. Forms a ternary complex with PSMB4 and OAZ1 before PSMB4 is incorporated into the 20S proteasome. Interacts (via MH2 domain) with FAM83G (via MH2 domain); in a SMAD4-independent manner. Interacts with ZC3H3. Interacts with TMEM119. Interacts (via MH1 and MH2 domains) with ZNF8. Interacts with RANBP3L; the interaction increases when SMAD1 is not phosphorylated and mediates SMAD1 nuclear export. Interacts with EGR1; this interaction inhibits SMAD1 dephosphorylation. Interacts with SMAD6. Interacts with YAP1. Interacts with MTMR4; negatively regulates BMP signaling through SMAD1 dephosphorylation and retention in endosomes. Phosphorylation of the C-terminal SVS motif by BMP type 1 receptor kinase activates SMAD1 by promoting dissociation from the receptor and trimerization with SMAD4. Phosphorylation by ERK2 MAP kinase in response to EGF or HGF prevents SMAD1 nuclear accumulation and transcriptional activity in response to BMP. Dephosphorylation, probably by PPM1A, induces its export from the nucleus to the cytoplasm. Dephosphorylation is inhibited by association with EGR1. Phosphorylation by CDK8/9 creates binding sites for YAP1, and subsequent phosphorylation by GSK3 switches off YAP1 binding and adds binding sites for SMURF1. In terms of processing, ubiquitinated by SMAD-specific E3 ubiquitin ligase SMURF1, leading to its degradation. Monoubiquitinated, leading to prevent DNA-binding. Deubiquitination by USP15 alleviates inhibition and promotes activation of TGF-beta target genes. Dephosphorylation, probably by PPM1A, induces its export from the nucleus to the cytoplasm. Phospho-SMAD1 is ubiquitinated by CHIP leading to disruption of the SMAD1-SMAD4 complex. Ubiquitous. Highest expression seen in the heart and skeletal muscle.

It localises to the cytoplasm. It is found in the nucleus. Transcriptional modulator that plays a role in various cellular processes, including embryonic development, cell differentiation, and tissue homeostasis. Upon BMP ligand binding to their receptors at the cell surface, is phosphorylated by activated type I BMP receptors (BMPRIs) and associates with SMAD4 to form a heteromeric complex which translocates into the nucleus acting as transcription factor. In turn, the hetero-trimeric complex recognizes cis-regulatory elements containing Smad Binding Elements (SBEs) to modulate the outcome of the signaling network. SMAD1/OAZ1/PSMB4 complex mediates the degradation of the CREBBP/EP300 repressor SNIP1. Positively regulates BMP4-induced expression of odontogenic development regulator MSX1 following IPO7-mediated nuclear import. The protein is Mothers against decapentaplegic homolog 1 (SMAD1) of Homo sapiens (Human).